Consider the following 665-residue polypeptide: Chaperone protein dnaK1 (665 aa).

Thr-198 is modified (phosphothreonine; by autocatalysis). The disordered stretch occupies residues 634 to 665 (DDPWDNQMNSNSRNSRYGNSRDDDPWDNDYFL). Residues 642-651 (NSNSRNSRYG) show a composition bias toward low complexity.

This sequence belongs to the heat shock protein 70 family.

Functionally, acts as a chaperone. The chain is Chaperone protein dnaK1 (dnaK1) from Prochlorococcus marinus subsp. pastoris (strain CCMP1986 / NIES-2087 / MED4).